The following is a 155-amino-acid chain: Eosinophil cationic protein (155 aa).

The first 25 residues, 1-25 (MGLKLLESRLCLLLSLGLVLMLASC), serve as a signal peptide directing secretion. The active-site Proton acceptor is the H38. 4 cysteine pairs are disulfide-bonded: C47–C106, C61–C118, C79–C133, and C86–C94. 62–66 (KDINT) contacts substrate. N-linked (GlcNAc...) asparagine glycans are attached at residues N88 and N107. Catalysis depends on H150, which acts as the Proton donor.

This sequence belongs to the pancreatic ribonuclease family.

It localises to the cytoplasmic granule. Functionally, cytotoxin and helminthotoxin with ribonuclease activity. Possesses a wide variety of biological activities. This is Eosinophil cationic protein (Rnase3) from Rattus norvegicus (Rat).